The sequence spans 197 residues: MEEPPVREEEDGEEDEGALAKSPLQLTTEDVYDISYVVGRELMALGSDPRVTRLQFKIVRVMEMLEALVNEGSLAVEELRMERDNLKQEVEGLRRAGVSGSEVNLGPDKMVVDLTDPNRPRFTLQELRDVLQERNKLKSQLLLVQEELQCYRSGLLPPRETPGGRREKDAMVTMGNGEKEERTIMKKLFSFRSGKHT.

The RH1 domain maps to 14-96 (EDEGALAKSP…KQEVEGLRRA (83 aa)). Residues 65–153 (LEALVNEGSL…VQEELQCYRS (89 aa)) adopt a coiled-coil conformation. Residues 119–184 (RPRFTLQELR…GNGEKEERTI (66 aa)) enclose the RH2 domain.

As to quaternary structure, homodimer. Interacts (via N-terminus) with MYO5A, the interaction is required for its role in dendrite formation. Interacts with RAC1. Interacts with RAB8A; interaction is dependent on the phosphorylation of RAB8A on 'Thr-72'. Interacts with RAB10 and RAB12; interaction is dependent on the phosphorylation of 'Thr-73' on RAB10 and 'Ser-105' on RAB12.

The protein localises to the cytoplasm. Its subcellular location is the cytosol. It localises to the cytoskeleton. It is found in the microtubule organizing center. The protein resides in the centrosome. The protein localises to the cell projection. Its subcellular location is the cilium. Involved in cell shape and neuronal morphogenesis, positively regulating the establishment and maintenance of dendritic spines. Plays a role in cellular protein transport, including protein transport away from primary cilia. May function via activation of RAC1 and PAK1. The chain is RILP-like protein 2 (Rilpl2) from Rattus norvegicus (Rat).